We begin with the raw amino-acid sequence, 146 residues long: MNLTDLRPADGSKQSGNFRRGRGHGSGNGKTAGKGHKGQKARSGAPRVGFEGGQMPLYRRLPKRGFKNRNTKEIISVNVSMLNRFEDGADVTLESLREIGIISNPKDGVKILGNGELTKKLNVKVSAFSESAIEKIKALGGNAEVI.

The segment at 1–54 (MNLTDLRPADGSKQSGNFRRGRGHGSGNGKTAGKGHKGQKARSGAPRVGFEGGQ) is disordered.

Belongs to the universal ribosomal protein uL15 family. As to quaternary structure, part of the 50S ribosomal subunit.

Its function is as follows. Binds to the 23S rRNA. This Lachnoclostridium phytofermentans (strain ATCC 700394 / DSM 18823 / ISDg) (Clostridium phytofermentans) protein is Large ribosomal subunit protein uL15.